Reading from the N-terminus, the 1245-residue chain is ATP-dependent helicase/nuclease subunit A (1245 aa).

A UvrD-like helicase ATP-binding domain is found at 4-477 (TKWTDEQLSA…IQLYKNFRSR (474 aa)). Residue 25-32 (AAAGSGKT) participates in ATP binding. Residues 517–815 (KFKDTIVGGP…RIMSIHKSKG (299 aa)) form the UvrD-like helicase C-terminal domain.

The protein belongs to the helicase family. AddA subfamily. In terms of assembly, heterodimer of AddA and AddB/RexB. Requires Mg(2+) as cofactor.

The catalysed reaction is Couples ATP hydrolysis with the unwinding of duplex DNA by translocating in the 3'-5' direction.. The enzyme catalyses ATP + H2O = ADP + phosphate + H(+). The heterodimer acts as both an ATP-dependent DNA helicase and an ATP-dependent, dual-direction single-stranded exonuclease. Recognizes the chi site generating a DNA molecule suitable for the initiation of homologous recombination. The AddA nuclease domain is required for chi fragment generation; this subunit has the helicase and 3' -&gt; 5' nuclease activities. This is ATP-dependent helicase/nuclease subunit A from Clostridium beijerinckii (strain ATCC 51743 / NCIMB 8052) (Clostridium acetobutylicum).